We begin with the raw amino-acid sequence, 1894 residues long: Adenylate kinase 9 (1894 aa).

An adenylate kinase 1 region spans residues 32 to 286 (TCFIIFGKPG…LFMTVIERLK (255 aa)). Position 41–46 (41–46 (GAGKTT)) interacts with ATP. Residues 61 to 90 (EALSVLEEHIAAEKETGAMLQSLLVSGHSI) are NMP 1. 117–120 (EMPS) is an AMP binding site. The segment at 161–206 (GQRQHSTTGYVYTREQWDPEIIESRRRKKRDFPKEGKSEEEEEEEE) is LID 1. The segment at 188–211 (KKRDFPKEGKSEEEEEEEEQEEEE) is disordered. A compositionally biased stretch (acidic residues) spans 198–211 (SEEEEEEEEQEEEE). R230 is a binding site for AMP. Residues 451–478 (IKVVQQRLLNEKQAKQQEERTLKELQVQ) adopt a coiled-coil conformation. A disordered region spans residues 492-533 (SEELPSLENTGSKLSSLEIGQEDKSKSETTITGDQVKDVSTE). Residues 651-691 (LERLQEEAQAKKREEEEIRKVKEEELRLEEEKQRLMELATK) are a coiled coil. Disordered stretches follow at residues 710–789 (PYPD…LGSE) and 876–911 (EEEAEDYQAETEIDEEQEEEEEEEEEGEEKIKEKRR). Positions 715–736 (PDNEAEEEVEDSEIHEESEAQE) are enriched in acidic residues. Composition is skewed to basic and acidic residues over residues 757-768 (EGDHEPEAEFKP) and 777-789 (ETEKDPKEGLGSE). The span at 876 to 903 (EEEAEDYQAETEIDEEQEEEEEEEEEGE) shows a compositional bias: acidic residues. The interval 976 to 1187 (LRICLLGPHG…VAKRRAELIL (212 aa)) is adenylate kinase 2. Residue 985–990 (GSGKTV) coordinates ATP. Positions 1005-1036 (QFDEFLQEKMLLKAERKFGPEFEDDSEEEQLV) are NMP 2. AMP contacts are provided by residues 1034 to 1036 (QLV) and 1063 to 1066 (VQLT). The tract at residues 1108-1128 (DGFPRHPEEAQFLGERGFFPD) is LID 2. Residues 1223-1241 (EFPKDEEEMSEEDEEQEAD) are compositionally biased toward acidic residues. Positions 1223-1243 (EFPKDEEEMSEEDEEQEADAT) are disordered. The adenylate kinase 3 stretch occupies residues 1395–1584 (VRIMIVGPPK…VWNEVLKDIQ (190 aa)). ATP is bound at residue 1404 to 1409 (KSGKTT). Residues 1424–1455 (SVGDALRGMLNNHPDSELSLMLNWHLHKGKTV) are NMP 3. Residues R1430, 1482 to 1485 (GYPV), and Q1489 contribute to the AMP site. The interval 1519–1533 (LEKKTEQSMSYPLHN) is LID 3.

It belongs to the adenylate kinase family. As to expression, highly expressed in the testis.

It localises to the cytoplasm. It is found in the nucleus. The protein localises to the cell projection. Its subcellular location is the cilium. The protein resides in the flagellum. The enzyme catalyses a ribonucleoside 5'-phosphate + ATP = a ribonucleoside 5'-diphosphate + ADP. The catalysed reaction is AMP + ATP = 2 ADP. It catalyses the reaction GTP + AMP = GDP + ADP. It carries out the reaction CMP + ATP = CDP + ADP. The enzyme catalyses GTP + CMP = CDP + GDP. The catalysed reaction is dAMP + ATP = dADP + ADP. It catalyses the reaction dCMP + ATP = dCDP + ADP. It carries out the reaction a ribonucleoside 5'-diphosphate + ATP = a ribonucleoside 5'-triphosphate + ADP. The enzyme catalyses CDP + ATP = CTP + ADP. The catalysed reaction is CDP + GTP = CTP + GDP. It catalyses the reaction GDP + ATP = GTP + ADP. It carries out the reaction UDP + ATP = UTP + ADP. The enzyme catalyses GTP + UDP = UTP + GDP. The catalysed reaction is dTDP + GTP = dTTP + GDP. It catalyses the reaction dCDP + ATP = dCTP + ADP. It carries out the reaction dCDP + GTP = dCTP + GDP. The enzyme catalyses dGDP + ATP = dGTP + ADP. The catalysed reaction is dTDP + ATP = dTTP + ADP. It catalyses the reaction dADP + GTP = dATP + GDP. Broad-specificity nucleoside phosphate kinase involved in cellular nucleotide homeostasis by catalyzing nucleoside-phosphate interconversions. Similar to other adenylate kinases, preferentially catalyzes the phosphorylation of the nucleoside monophosphate AMP with ATP as phosphate donor to produce ADP. In vitro, can also catalyze the phosphorylation of CMP, dAMP and dCMP and use GTP as an alternate phosphate donor. Moreover, exhibits a diphosphate kinase activity, producing ATP, CTP, GTP, UTP, TTP, dATP, dCTP and dGTP from the corresponding diphosphate substrates with either ATP or GTP as phosphate donors. For this activity shows the following substrate preference CDP &gt; UDP &gt; ADP &gt; TDP. This chain is Adenylate kinase 9, found in Mus musculus (Mouse).